The sequence spans 984 residues: uncharacterized protein (984 aa).

Positions 941-984 are disordered; it reads FGPSGPGPNQGPGDDYNNFKSTKYPRNGYNKYQPNNRIHSRNRY.

The protein resides in the virion. This is an uncharacterized protein from Acanthamoeba polyphaga (Amoeba).